Reading from the N-terminus, the 512-residue chain is Tyrosine-protein kinase Lyn (512 aa).

The segment at 1–50 (MGCIKSKRKDNLNDDGVDMKTQPVRNTDRTIYVRDPTSNKQQRPVPESQL) is disordered. A lipid anchor (N-myristoyl glycine) is attached at glycine 2. A lipid anchor (S-palmitoyl cysteine) is attached at cysteine 3. The SH3 domain maps to 63–123 (EQGDIVVALY…PSNYVAKVNT (61 aa)). In terms of domain architecture, SH2 spans 129–226 (WFFKDITRKD…GLCRRLEKAC (98 aa)). Tyrosine 193 carries the post-translational modification Phosphotyrosine. Phosphoserine is present on serine 228. Residues 247-501 (IKLVKKLGAG…YLQSVLDDFY (255 aa)) enclose the Protein kinase domain. ATP is bound by residues 253–261 (LGAGQFGEV) and lysine 275. Phosphotyrosine occurs at positions 306 and 316. Residue aspartate 367 is the Proton acceptor of the active site. Tyrosine 397 carries the phosphotyrosine; by autocatalysis modification. Residues tyrosine 460 and tyrosine 473 each carry the phosphotyrosine modification. Tyrosine 508 is modified (phosphotyrosine; by autocatalysis, CSK and MATK).

Belongs to the protein kinase superfamily. Tyr protein kinase family. SRC subfamily. As to quaternary structure, interacts with TEC. Interacts (via SH2 domain) with FLT3 (tyrosine phosphorylated). Interacts with LIME1 and with CD79A upon activation of the B-cell antigen receptor. Interacts with the B-cell receptor complex. Interacts with phosphorylated THEMIS2. Interacts with EPOR. Interacts with MS4A2/FCER1B. Interaction (via the SH2 and SH3 domains) with MUC1 is stimulated by IL7 and the subsequent phosphorylation increases the binding between MUC1 and CTNNB1/beta-catenin. Interacts with ADAM15. Interacts with NDFIP2 and more weakly with NDFIP1. Interacts with FASLG. Interacts with KIT. Interacts with HCLS1. Interacts with FCGR2B. Interacts with FCGR1A; the interaction may be indirect. Interacts with CD19, CD22, CD79A and CD79B. Interacts (via SH3 domain) with CBLC, PPP1R15A and PDE4A. Interacts with TGFB1I1. Interacts (via SH3 domain) with PIK3R1, the regulatory subunit of phosphatidylinositol 3-kinase; this interaction enhances phosphatidylinositol 3-kinase activity. Interacts with CSF2RB, the common subunit of the IL3, IL5 and CSF2 receptors. Interacts with PAG1; identified in a complex with PAG1 and STAT3. Interacts with ABL1. Interacts with PTPN6/SHP-1. Interacts (via SH3 domain) with SCIMP (via proline-rich region). This interaction facilitates the phosphorylation of SCIMP 'Tyr-96', which enhances binding of SCIMP to TLR4, and consequently the phosphorylation of TLR4 in response to stimulation by lipopolysaccharide in macrophages. Interacts with LPXN (via LD motif 3) and the interaction is induced upon B-cell antigen receptor (BCR) activation. Interacts (via SH3-domain) with ANKRD54 (via ankyrin repeat region) in an activation-independent status of LYN. Forms a multiprotein complex with ANKRD54 and HCLS1. Interacts (via SH2 and SH3 domains) with UNC119; leading to LYN activation. Interacts with CD36. Interacts with LYN. Interacts with SKAP1 and FYB1; this interaction promotes the phosphorylation of CLNK. Interacts with BCAR1/CAS and NEDD9/HEF1. In terms of processing, ubiquitinated. Ubiquitination is SH3-dependent. Autophosphorylated. Phosphorylated on tyrosine residues in response to KIT signaling. Phosphorylation at Tyr-397 is required for optimal activity. Phosphorylation at Tyr-508 inhibits kinase activity. Phosphorylated at Tyr-508 by CSK. Dephosphorylated by PTPRC/CD45. Becomes rapidly phosphorylated upon activation of the B-cell receptor and the immunoglobulin receptor FCGR1A. Phosphorylated in response to integrin ITGB1 in B-cells. As to expression, detected in spleen (at protein level). Expressed predominantly in B-lymphoid and myeloid cells.

The protein localises to the cell membrane. Its subcellular location is the nucleus. The protein resides in the cytoplasm. It is found in the perinuclear region. It localises to the golgi apparatus. The protein localises to the membrane. It carries out the reaction L-tyrosyl-[protein] + ATP = O-phospho-L-tyrosyl-[protein] + ADP + H(+). Subject to autoinhibition, mediated by intramolecular interactions between the SH2 domain and the C-terminal phosphotyrosine. Phosphorylation at Tyr-397 is required for optimal activity. Phosphorylated by CSK at Tyr-508; phosphorylation at Tyr-508 inhibits kinase activity. Kinase activity is modulated by dephosphorylation by PTPRC/CD45. In terms of biological role, non-receptor tyrosine-protein kinase that transmits signals from cell surface receptors and plays an important role in the regulation of innate and adaptive immune responses, hematopoiesis, responses to growth factors and cytokines, integrin signaling, but also responses to DNA damage and genotoxic agents. Functions primarily as negative regulator, but can also function as activator, depending on the context. Required for the initiation of the B-cell response, but also for its down-regulation and termination. Plays an important role in the regulation of B-cell differentiation, proliferation, survival and apoptosis, and is important for immune self-tolerance. Acts downstream of several immune receptors, including the B-cell receptor, CD79A, CD79B, CD5, CD19, CD22, FCER1, FCGR2, FCGR1A, TLR2 and TLR4. Plays a role in the inflammatory response to bacterial lipopolysaccharide. Mediates the responses to cytokines and growth factors in hematopoietic progenitors, platelets, erythrocytes, and in mature myeloid cells, such as dendritic cells, neutrophils and eosinophils. Acts downstream of EPOR, KIT, MPL, the chemokine receptor CXCR4, as well as the receptors for IL3, IL5 and CSF2. Plays an important role in integrin signaling. Regulates cell proliferation, survival, differentiation, migration, adhesion, degranulation, and cytokine release. Involved in the regulation of endothelial activation, neutrophil adhesion and transendothelial migration. Down-regulates signaling pathways by phosphorylation of immunoreceptor tyrosine-based inhibitory motifs (ITIM), that then serve as binding sites for phosphatases, such as PTPN6/SHP-1, PTPN11/SHP-2 and INPP5D/SHIP-1, that modulate signaling by dephosphorylation of kinases and their substrates. Phosphorylates LIME1 in response to CD22 activation. Phosphorylates BTK, CBL, CD5, CD19, CD72, CD79A, CD79B, CSF2RB, DOK1, HCLS1, LILRB3/PIR-B, MS4A2/FCER1B, SYK and TEC. Promotes phosphorylation of SIRPA, PTPN6/SHP-1, PTPN11/SHP-2 and INPP5D/SHIP-1. Required for rapid phosphorylation of FER in response to FCER1 activation. Mediates KIT phosphorylation. Acts as an effector of EPOR (erythropoietin receptor) in controlling KIT expression and may play a role in erythroid differentiation during the switch between proliferation and maturation. Depending on the context, activates or inhibits several signaling cascades. Regulates phosphatidylinositol 3-kinase activity and AKT1 activation. Regulates activation of the MAP kinase signaling cascade, including activation of MAP2K1/MEK1, MAPK1/ERK2, MAPK3/ERK1, MAPK8/JNK1 and MAPK9/JNK2. Mediates activation of STAT5A and/or STAT5B. Phosphorylates LPXN on 'Tyr-72'. Kinase activity facilitates TLR4-TLR6 heterodimerization and signal initiation. Phosphorylates SCIMP on 'Tyr-96'; this enhances binding of SCIMP to TLR4, promoting the phosphorylation of TLR4, and a selective cytokine response to lipopolysaccharide in macrophages. Phosphorylates CLNK. Phosphorylates BCAR1/CAS and NEDD9/HEF1. This Rattus norvegicus (Rat) protein is Tyrosine-protein kinase Lyn (Lyn).